A 359-amino-acid polypeptide reads, in one-letter code: Pyruvate dehydrogenase E1 component subunit beta, mitochondrial (359 aa).

The transit peptide at 1 to 30 (MAVVAVLVRKPLEQVSGLLRRRFHRTAPAA) directs the protein to the mitochondrion. A Phosphotyrosine modification is found at Tyr-67. Glu-89 is a binding site for thiamine diphosphate. The K(+) site is built by Ile-142, Ala-190, Ile-191, Asp-193, and Asn-195. Lys-354 bears the N6-acetyllysine mark.

Heterotetramer of two PDHA1 and two PDHB subunits. The heterotetramer interacts with DLAT, and is part of the multimeric pyruvate dehydrogenase complex that contains multiple copies of pyruvate dehydrogenase (E1), dihydrolipoamide acetyltransferase (DLAT, E2) and lipoamide dehydrogenase (DLD, E3). These subunits are bound to an inner core composed of about 48 DLAT and 12 PDHX molecules. Interacts with DLAT. Thiamine diphosphate serves as cofactor.

The protein resides in the mitochondrion matrix. It carries out the reaction N(6)-[(R)-lipoyl]-L-lysyl-[protein] + pyruvate + H(+) = N(6)-[(R)-S(8)-acetyldihydrolipoyl]-L-lysyl-[protein] + CO2. In terms of biological role, the pyruvate dehydrogenase complex catalyzes the overall conversion of pyruvate to acetyl-CoA and CO(2), and thereby links the glycolytic pathway to the tricarboxylic cycle. The chain is Pyruvate dehydrogenase E1 component subunit beta, mitochondrial (PDHB) from Bos taurus (Bovine).